Reading from the N-terminus, the 445-residue chain is GTPase Der (445 aa).

EngA-type G domains follow at residues 3–166 (PVIA…AERV) and 180–353 (IRIG…ESCY). GTP is bound by residues 9–16 (GRPNVGKS), 56–60 (DTGGI), 118–121 (NKTD), 186–193 (GRPNVGKS), 233–237 (DTAGI), and 298–301 (NKWD). The KH-like domain occupies 354–438 (AKWTTNRLTR…PIIFEFKSAE (85 aa)).

Belongs to the TRAFAC class TrmE-Era-EngA-EngB-Septin-like GTPase superfamily. EngA (Der) GTPase family. In terms of assembly, associates with the 50S ribosomal subunit.

Its function is as follows. GTPase that plays an essential role in the late steps of ribosome biogenesis. The chain is GTPase Der from Marinomonas sp. (strain MWYL1).